The following is a 235-amino-acid chain: Ribonuclease 3 (235 aa).

An RNase III domain is found at 7-131 (LSALEARIGH…IIGAVFLDGG (125 aa)). Glu-45 is a binding site for Mg(2+). The active site involves Asp-49. Residues Asp-117 and Glu-120 each contribute to the Mg(2+) site. Glu-120 is an active-site residue. One can recognise a DRBM domain in the interval 156–225 (DPKTTLQEWA…AAAFLTREKI (70 aa)).

Belongs to the ribonuclease III family. As to quaternary structure, homodimer. Mg(2+) serves as cofactor.

It is found in the cytoplasm. It carries out the reaction Endonucleolytic cleavage to 5'-phosphomonoester.. In terms of biological role, digests double-stranded RNA. Involved in the processing of primary rRNA transcript to yield the immediate precursors to the large and small rRNAs (23S and 16S). Processes some mRNAs, and tRNAs when they are encoded in the rRNA operon. Processes pre-crRNA and tracrRNA of type II CRISPR loci if present in the organism. This Methylocella silvestris (strain DSM 15510 / CIP 108128 / LMG 27833 / NCIMB 13906 / BL2) protein is Ribonuclease 3.